The sequence spans 100 residues: Small ribosomal subunit protein uS14c (100 aa).

This sequence belongs to the universal ribosomal protein uS14 family. In terms of assembly, part of the 30S ribosomal subunit.

Its subcellular location is the plastid. The protein resides in the chloroplast. Its function is as follows. Binds 16S rRNA, required for the assembly of 30S particles. This Barbarea verna (Land cress) protein is Small ribosomal subunit protein uS14c.